The sequence spans 299 residues: ATP phosphoribosyltransferase (299 aa).

This sequence belongs to the ATP phosphoribosyltransferase family. Long subfamily. Requires Mg(2+) as cofactor.

It is found in the cytoplasm. The catalysed reaction is 1-(5-phospho-beta-D-ribosyl)-ATP + diphosphate = 5-phospho-alpha-D-ribose 1-diphosphate + ATP. It functions in the pathway amino-acid biosynthesis; L-histidine biosynthesis; L-histidine from 5-phospho-alpha-D-ribose 1-diphosphate: step 1/9. With respect to regulation, feedback inhibited by histidine. Catalyzes the condensation of ATP and 5-phosphoribose 1-diphosphate to form N'-(5'-phosphoribosyl)-ATP (PR-ATP). Has a crucial role in the pathway because the rate of histidine biosynthesis seems to be controlled primarily by regulation of HisG enzymatic activity. This Shewanella halifaxensis (strain HAW-EB4) protein is ATP phosphoribosyltransferase.